The chain runs to 318 residues: Ribokinase (318 aa).

Substrate-binding positions include 11–13 (NTD), 41–45 (GKGAN), and Glu146. Residues Asn190 and 229–234 (TLGSQG) contribute to the ATP site. Asp256 and Thr258 together coordinate K(+). 261 to 262 (GD) is an ATP binding site. Substrate is bound at residue Asp262. Catalysis depends on Asp262, which acts as the Proton acceptor. The K(+) site is built by Thr292, Arg295, Gly297, and Ser301.

It belongs to the carbohydrate kinase PfkB family. Ribokinase subfamily. Homodimer. The cofactor is Mg(2+).

It is found in the cytoplasm. The protein localises to the nucleus. The catalysed reaction is D-ribose + ATP = D-ribose 5-phosphate + ADP + H(+). The protein operates within carbohydrate metabolism; D-ribose degradation; D-ribose 5-phosphate from beta-D-ribopyranose: step 2/2. With respect to regulation, activated by a monovalent cation that binds near, but not in, the active site. The most likely occupant of the site in vivo is potassium. Ion binding induces a conformational change that may alter substrate affinity. In terms of biological role, catalyzes the phosphorylation of ribose at O-5 in a reaction requiring ATP and magnesium. The resulting D-ribose-5-phosphate can then be used either for sythesis of nucleotides, histidine, and tryptophan, or as a component of the pentose phosphate pathway. This chain is Ribokinase, found in Schizosaccharomyces pombe (strain 972 / ATCC 24843) (Fission yeast).